The primary structure comprises 617 residues: Cell pattern formation-associated protein STUA (617 aa).

Residues 1 to 79 are disordered; it reads MNQPAADMYY…PASQMGQNVL (79 aa). Positions 24–34 are enriched in polar residues; sequence TVTSGAMSYHS. Low complexity predominate over residues 45 to 58; it reads PQYAPQPQYSQYGY. Over residues 61–76 the composition is skewed to polar residues; sequence GLTSPQSAQPASQMGQ. The HTH APSES-type domain occupies 106 to 212; the sequence is RVTATLWEDE…HNIGALLYHP (107 aa). The H-T-H motif DNA-binding region spans 140-161; sequence GTKLLNVAGMTRGRRDGILKSE. 3 disordered regions span residues 223-274, 300-451, and 463-617; these read AAAE…MGRP, SDSG…DSGA, and APAV…PRRR. Low complexity-rich tracts occupy residues 305-318 and 334-345; these read QWAQ…AQGA and PATPASTPPGTT. Polar residues-rich tracts occupy residues 346–361 and 368–382; these read IQNM…QYDN and PSAQ…NPAS. A compositionally biased stretch (basic and acidic residues) spans 438–447; the sequence is EHDHDAEYTH. Residues 488–509 show a composition bias toward low complexity; sequence PASGRATPRTAAAPQPYYSQQA. 2 stretches are compositionally biased toward polar residues: residues 519-533 and 553-563; these read QQPS…SNDR and SMSNGYASQMN. Residues 569 to 593 form a nuclear localization domain region; that stretch reads KRGRDEDDDLQRPSSGGGMDLKRRK. The segment covering 599–617 has biased composition (low complexity); the sequence is QVPAMAYAPPVMAQQPRRR.

This sequence belongs to the EFG1/PHD1/stuA family.

The protein resides in the nucleus. Its function is as follows. Transcription factor that regulates asexual reproduction. Binds the StuA-response elements (StRE) with the consensus sequence 5'-(A/T)CGCG(T/A)N(A/C)-3' at the promoters of target genes. Required for the formation of aerial hyphae, efficient conidiation, and the formation of perithecia. Essential for the generation of normal turgor pressure within the appressorium. Required for infection of intact apple fruit and penetration of onion epidermal cells. The chain is Cell pattern formation-associated protein STUA from Colletotrichum gloeosporioides (Anthracnose fungus).